The following is a 202-amino-acid chain: Ribonuclease HII (202 aa).

The RNase H type-2 domain maps to 1-195 (MIVAGVDEVG…PELKGGSPAG (195 aa)). Positions 7, 8, and 103 each coordinate a divalent metal cation.

This sequence belongs to the RNase HII family. Requires Mn(2+) as cofactor. The cofactor is Mg(2+).

It is found in the cytoplasm. The catalysed reaction is Endonucleolytic cleavage to 5'-phosphomonoester.. Endonuclease that specifically degrades the RNA of RNA-DNA hybrids. This Synechococcus sp. (strain RCC307) protein is Ribonuclease HII.